The sequence spans 72 residues: Prokaryotic ubiquitin-like protein Pup (72 aa).

A compositionally biased stretch (gly residues) spans methionine 1–glutamine 10. The tract at residues methionine 1–aspartate 45 is disordered. Residues glutamine 10–glutamate 60 are a coiled coil. An ARC ATPase binding region spans residues glutamine 28–phenylalanine 66. Basic and acidic residues predominate over residues leucine 33–aspartate 42. A Deamidated glutamine modification is found at glutamine 72. Glutamine 72 participates in a covalent cross-link: Isoglutamyl lysine isopeptide (Gln-Lys) (interchain with K-? in acceptor proteins).

It belongs to the prokaryotic ubiquitin-like protein family. Strongly interacts with the proteasome-associated ATPase ARC through a hydrophobic interface; the interacting region of Pup lies in its C-terminal half. There is one Pup binding site per ARC hexamer ring. Post-translationally, is modified by deamidation of its C-terminal glutamine to glutamate by the deamidase Dop, a prerequisite to the subsequent pupylation process.

The protein operates within protein degradation; proteasomal Pup-dependent pathway. Its function is as follows. Protein modifier that is covalently attached to lysine residues of substrate proteins, thereby targeting them for proteasomal degradation. The tagging system is termed pupylation. This is Prokaryotic ubiquitin-like protein Pup from Streptomyces griseus subsp. griseus (strain JCM 4626 / CBS 651.72 / NBRC 13350 / KCC S-0626 / ISP 5235).